Here is a 221-residue protein sequence, read N- to C-terminus: F-box protein At1g55000 (221 aa).

The region spanning 7–46 (DTLIIIFQKLTVADLARASCVCKVWNSVATEDDLVVSAFT) is the F-box domain. Positions 74–118 (ISHRICRGDSVTSLAVKYAVQVMDIKRLNNMMSDHGIYSRDRLLI) constitute a LysM domain.

In terms of assembly, part of a SCF (ASK-cullin-F-box) protein ligase complex. Interacts with SKP1A/ASK1, SKP1B/ASK2, ASK4, ASK11 and ASK13.

It participates in protein modification; protein ubiquitination. Its function is as follows. Component of SCF(ASK-cullin-F-box) E3 ubiquitin ligase complexes, which may mediate the ubiquitination and subsequent proteasomal degradation of target proteins. This is F-box protein At1g55000 from Arabidopsis thaliana (Mouse-ear cress).